The primary structure comprises 318 residues: Olfactory receptor 13C2 (318 aa).

Over 1 to 25 the chain is Extracellular; it reads MEWENHTILVEFFLKGLSGHPRLEL. Asn-5 carries an N-linked (GlcNAc...) asparagine glycan. Residues 26–46 traverse the membrane as a helical segment; it reads LFFVLIFIMYVVILLGNGTLI. Topologically, residues 47–54 are cytoplasmic; sequence LISILDPH. The chain crosses the membrane as a helical span at residues 55-75; it reads LHTPMYFFLGNLSFLDICYTT. Over 76-99 the chain is Extracellular; the sequence is TSIPSTLVSFLSERKTISLSGCAV. A disulfide bridge links Cys-97 with Cys-189. Residues 100 to 120 form a helical membrane-spanning segment; the sequence is QMFLGLAMGTTECVLLGMMAF. Over 121 to 139 the chain is Cytoplasmic; sequence DRYVAICNPLRYPIIMSKD. The chain crosses the membrane as a helical span at residues 140 to 160; it reads AYVPMAAGSWIIGAVNSAVQS. Over 161–197 the chain is Extracellular; it reads VFVVQLPFCRNNIINHFTCEILAVMKLACADISDNEF. The helical transmembrane segment at 198–217 threads the bilayer; that stretch reads IMLVATTLFILTPLLLIIVS. Topologically, residues 218 to 237 are cytoplasmic; that stretch reads YTLIIVSIFKISSSEGRSKA. A helical membrane pass occupies residues 238–258; it reads SSTCSAHLTVVIIFYGTILFM. Residues 259–277 are Extracellular-facing; sequence YMKPKSKETLNSDDLDATD. Residues 278–298 traverse the membrane as a helical segment; it reads KIISMFYGVMTPMMNPLIYSL. The Cytoplasmic portion of the chain corresponds to 299 to 318; that stretch reads RNKDVKEAVKHLLNRRFFSK.

This sequence belongs to the G-protein coupled receptor 1 family.

Its subcellular location is the cell membrane. Odorant receptor. This is Olfactory receptor 13C2 (OR13C2) from Homo sapiens (Human).